A 514-amino-acid polypeptide reads, in one-letter code: MRAFLALIFLTFVMNVESSRPLMAFTPSHGWMNDPNGQFYDSKNELWHLYYQYNPNDTVWGTPLYWGHATSKDLSTWKDYGATIGPDRDEDGIFSGNIVVDHNNTSGFFNDSIDPRQRVVAIYTYNTEGSQTQHVAYSLDGGYTFEKYEHNPVLDVDNINFRDPKVFWHEPTNQWIMVIALSQQFKIQIYGSIDLTNWSLHSNFTGGLFGFQYECPGLIEVPAEGTDESKWVMFIAINPGSPLGGSSNQYFIGSFDGFEFVPDDSQARLMDYGKDFYAFQTFDNAPKESGVVGLAWASNWQYANLAPTKEWRSSMTLARQMTLASRNMNPETKVLSLLQKPIFGESVVAANKISKRNITGQDEQAVKIHKNSTGTFSFDITFSVDSSKNQTGQLQVISGQNGESIRAGFDPTAGQFFVDRGNTSGLKENPFLTDKTSAYVEPWKHQNDLPVYKMFGVIDGNLIEVFLNDGIATLTNTFFIPGTEGLEYLEIESSSDAIHIVESEVKELKLRATS.

The signal sequence occupies residues 1 to 18 (MRAFLALIFLTFVMNVES). Residues 33–34 (ND) and glutamine 52 contribute to the substrate site. The Nucleophile role is filled by aspartate 34. N-linked (GlcNAc...) asparagine glycosylation occurs at asparagine 56. Residues tryptophan 60 and serine 95 each contribute to the substrate site. Residues asparagine 104 and asparagine 110 are each glycosylated (N-linked (GlcNAc...) asparagine). Position 162–163 (162–163 (RD)) interacts with substrate. Asparagine 197 and asparagine 203 each carry an N-linked (GlcNAc...) asparagine glycan. Glutamate 214 and tryptophan 300 together coordinate substrate. Catalysis depends on glutamate 214, which acts as the Proton donor/acceptor. N-linked (GlcNAc...) asparagine glycans are attached at residues asparagine 357, asparagine 371, asparagine 389, and asparagine 422.

Belongs to the glycosyl hydrolase 32 family.

The protein localises to the secreted. It catalyses the reaction Hydrolysis of terminal, non-reducing (2-&gt;1)- and (2-&gt;6)-linked beta-D-fructofuranose residues in fructans.. Functionally, exo-inulinase involved in utilization of the plant storage polymer inulin, consisting of fructooligosaccharides with a degree of polymerization (DP) value from 2 to 60. Splits off terminal fructose units successively from the non-reducing end of the inulin molecule. In Meyerozyma guilliermondii (Yeast), this protein is Extracellular exo-inulinase inuE.